The primary structure comprises 2063 residues: Nuclear receptor coactivator 6 (2063 aa).

The TBP/GTF2A-binding region stretch occupies residues 1-928; sequence MVLDDLPNLE…PPRKKKNSQQ (928 aa). Positions 1-1057 are CREBBP-binding region; it reads MVLDDLPNLE…LPVSQNVHPP (1057 aa). Residues 1–1310 are NCOA1-binding region; that stretch reads MVLDDLPNLE…QTHKLDSVVV (1310 aa). Arg95 carries the asymmetric dimethylarginine modification. 3 disordered regions span residues 184 to 251, 281 to 549, and 789 to 811; these read IPPG…VNRQ, QQQQ…APQL, and RPPGPSPHMAQQHGDPATTANND. Residues 281–300 are compositionally biased toward low complexity; it reads QQQQQLQARPPQQHQQQQPQ. 5 stretches are compositionally biased toward polar residues: residues 353-368, 379-406, 417-453, 462-502, and 522-549; these read MQQQLQARPSLATVQT, GSQQASQAHTNFPQMSNPGQFTAPQMKS, PLQQPHLTNKSPASSPSSFQQGSPASSPTVNQTQQQM, PLPQ…QGPQ, and GQANPNFMQGQVPSTTATTPGNSGAPQL. Positions 773–927 are NCOA6IP-binding region; the sequence is VNNSPSQVMG…KPPRKKKNSQ (155 aa). Ser884 is subject to Phosphoserine; by MAPK; in vitro. The short motif at 887–891 is the LXXLL motif 1 element; sequence LVNLL. Disordered stretches follow at residues 899-1278, 1310-1353, and 1448-1474; these read HFGV…LNPT, VNSG…KAPK, and EVKMVVPEDQSKKDGQPSDPNKLPSVE. Positions 903–912 are enriched in low complexity; it reads NNKQNNTNAN. Basic residues predominate over residues 913–925; the sequence is KPKKKKPPRKKKN. A compositionally biased stretch (low complexity) spans 982 to 992; that stretch reads PLQQMPPQLMQ. The segment covering 995–1020 has biased composition (pro residues); sequence APPPQPPQQQPQPQLPQQQQPPPPSQ. Over residues 1021 to 1041 the composition is skewed to low complexity; sequence PQSQQQQQQQQQMMMMLMMQQ. An asymmetric dimethylarginine mark is found at Arg1047 and Arg1058. A compositionally biased stretch (polar residues) spans 1063–1075; sequence PDSQRMPMQQSGS. Arg1096 is subject to Asymmetric dimethylarginine. Composition is skewed to polar residues over residues 1104–1125, 1173–1191, and 1202–1214; these read PLGSNSRKMVYQESPQNPSSSP, LSATQGATPQQPPVNSLPS, and APTQTSRPKTPNR. Pro residues predominate over residues 1219–1232; that stretch reads PYYPQTPNNRPPST. Over residues 1310–1320 the composition is skewed to polar residues; the sequence is VNSGKQSNSGA. Residues 1322–1345 are compositionally biased toward low complexity; that stretch reads KRASPSNSRRSSPGSSRKTTPSPG. The LXXLL motif 2 signature appears at 1491-1495; sequence LSQLL. The EP300/CRSP3-binding region stretch occupies residues 1641–2063; it reads SEGQSAAQSN…AVQSKRRKSK (423 aa). A disordered region spans residues 1738–1820; the sequence is ATPVQLPSPP…VSSSKGKGKV (83 aa). A compositionally biased stretch (low complexity) spans 1750–1763; it reads SSPVVPSHPPVQQV. Residues 1773 to 1798 show a composition bias toward polar residues; it reads PQVNTSADQNTLPSSQSTTMVSPLLT. Residues 1799–1815 are compositionally biased toward low complexity; that stretch reads NSPGSSGNRRSPVSSSK. N6-acetyllysine is present on residues Lys1819 and Lys1822. Disordered stretches follow at residues 1837-1908 and 1995-2063; these read GSLE…LPGG and IVSG…RKSK. Basic and acidic residues predominate over residues 2002 to 2011; the sequence is EPKEIVEKSK. Ser2018 carries the post-translational modification Phosphoserine.

Monomer and homodimer. Interacts with RBM39. Interacts in vitro with the basal transcription factors GTF2A and TBP, suggesting an autonomous transactivation function. Interacts with NCOA1, CRSP3, RBM14, the histone acetyltransferases EP300 and CREBBP, and with the methyltransferases NCOA6IP and PRMT2/HRMT1L1. Component of the MLL2/3 complex (also named ASCOM complex), at least composed of KMT2D/MLL2 or KMT2C/MLL3, ASH2L, RBBP5, WDR5, NCOA6, DPY30, KDM6A, PAXIP1/PTIP, PAGR1 and alpha- and beta-tubulin. Interacts with ZNF335; may enhance ligand-dependent transcriptional activation by nuclear hormone receptors. Phosphorylated by PRKDC. Post-translationally, phosphorylation on Ser-884 leads to a strong decrease in binding to ESR1 and ESR2. Ubiquitous. Highly expressed in brain, prostate, testis and ovary; weakly expressed in lung, thymus and small intestine.

It localises to the nucleus. In terms of biological role, nuclear receptor coactivator that directly binds nuclear receptors and stimulates the transcriptional activities in a hormone-dependent fashion. Coactivates expression in an agonist- and AF2-dependent manner. Involved in the coactivation of different nuclear receptors, such as for steroids (GR and ERs), retinoids (RARs and RXRs), thyroid hormone (TRs), vitamin D3 (VDR) and prostanoids (PPARs). Probably functions as a general coactivator, rather than just a nuclear receptor coactivator. May also be involved in the coactivation of the NF-kappa-B pathway. May coactivate expression via a remodeling of chromatin and its interaction with histone acetyltransferase proteins. This Homo sapiens (Human) protein is Nuclear receptor coactivator 6 (NCOA6).